A 99-amino-acid chain; its full sequence is UPF0213 protein RBAM_000440 (99 aa).

Residues 4-79 (NSHFFYVLLC…KQLTRKKKEQ (76 aa)) enclose the GIY-YIG domain.

It belongs to the UPF0213 family.

The protein is UPF0213 protein RBAM_000440 of Bacillus velezensis (strain DSM 23117 / BGSC 10A6 / LMG 26770 / FZB42) (Bacillus amyloliquefaciens subsp. plantarum).